Consider the following 156-residue polypeptide: Small ribosomal subunit protein uS7c (156 aa).

The protein belongs to the universal ribosomal protein uS7 family. As to quaternary structure, part of the 30S ribosomal subunit.

It is found in the plastid. Its subcellular location is the chloroplast. Its function is as follows. One of the primary rRNA binding proteins, it binds directly to 16S rRNA where it nucleates assembly of the head domain of the 30S subunit. The chain is Small ribosomal subunit protein uS7c (rps7) from Cycas revoluta (Sago palm).